The sequence spans 463 residues: Interferon-inducible GTPase 5 (463 aa).

Residues I53–D235 form the IRG-type G domain. Residues E62–S69, T87–E91, K169–D171, and S216–L218 each bind GTP. Residues S247 and S304 each carry the phosphoserine modification. Residues L404 to P437 are disordered.

It belongs to the TRAFAC class dynamin-like GTPase superfamily. IRG family. As to expression, abundantly expressed in semen (at protein level).

The protein resides in the cell projection. The protein localises to the cilium. It localises to the flagellum. It is found in the lipid droplet. The catalysed reaction is GTP + H2O = GDP + phosphate + H(+). Required for sperm motility and therefore male fertility, via positive regulation of spermatozoa fibrous sheath formation. The chain is Interferon-inducible GTPase 5 from Homo sapiens (Human).